We begin with the raw amino-acid sequence, 243 residues long: Small ribosomal subunit protein uS5 (243 aa).

2 stretches are compositionally biased toward basic and acidic residues: residues 1–21 (MPID…EGQK) and 34–46 (LEEK…DHKG). Residues 1–85 (MPIDKKQEKN…NFKKNANKKP (85 aa)) form a disordered region. Residues 89 to 152 (FEEKIVNIAR…KDAQNNLIRV (64 aa)) enclose the S5 DRBM domain.

The protein belongs to the universal ribosomal protein uS5 family. As to quaternary structure, part of the 30S ribosomal subunit. Contacts proteins S4 and S8.

In terms of biological role, with S4 and S12 plays an important role in translational accuracy. Its function is as follows. Located at the back of the 30S subunit body where it stabilizes the conformation of the head with respect to the body. The sequence is that of Small ribosomal subunit protein uS5 from Mycoplasma mobile (strain ATCC 43663 / 163K / NCTC 11711) (Mesomycoplasma mobile).